Consider the following 315-residue polypeptide: Ester hydrolase C11orf54 homolog (315 aa).

Residues His-266, His-268, and His-278 each coordinate Zn(2+).

As to quaternary structure, monomer. Requires Zn(2+) as cofactor.

It is found in the nucleus. The protein resides in the cytoplasm. In terms of biological role, exhibits ester hydrolase activity on the substrate p-nitrophenyl acetate, in vitro. Regulates DNA damage and repair by regulating HIF1A degradation via chaperone-mediated autophagy (CMA). The sequence is that of Ester hydrolase C11orf54 homolog from Rattus norvegicus (Rat).